A 36-amino-acid chain; its full sequence is MEVNILGVIAVALFILIPTSFLLILYVKTSAENKDN.

A helical transmembrane segment spans residues 5–25 (ILGVIAVALFILIPTSFLLIL).

The protein belongs to the PsbM family. As to quaternary structure, PSII is composed of 1 copy each of membrane proteins PsbA, PsbB, PsbC, PsbD, PsbE, PsbF, PsbH, PsbI, PsbJ, PsbK, PsbL, PsbM, PsbT, PsbY, PsbZ, Psb30/Ycf12, at least 3 peripheral proteins of the oxygen-evolving complex and a large number of cofactors. It forms dimeric complexes.

The protein localises to the plastid. It localises to the chloroplast thylakoid membrane. Its function is as follows. One of the components of the core complex of photosystem II (PSII). PSII is a light-driven water:plastoquinone oxidoreductase that uses light energy to abstract electrons from H(2)O, generating O(2) and a proton gradient subsequently used for ATP formation. It consists of a core antenna complex that captures photons, and an electron transfer chain that converts photonic excitation into a charge separation. This subunit is found at the monomer-monomer interface. In Bigelowiella natans (Pedinomonas minutissima), this protein is Photosystem II reaction center protein M.